A 463-amino-acid polypeptide reads, in one-letter code: Trigger factor (463 aa).

In terms of domain architecture, PPIase FKBP-type spans 162–243 (GDVVTLDLEA…VSQVAARELP (82 aa)). The interval 427 to 463 (TNGEIVDLDDEDETESTPETTEAAEAAEESTEDKPEA) is disordered. Residues 432–442 (VDLDDEDETES) are compositionally biased toward acidic residues.

The protein belongs to the FKBP-type PPIase family. Tig subfamily.

Its subcellular location is the cytoplasm. It catalyses the reaction [protein]-peptidylproline (omega=180) = [protein]-peptidylproline (omega=0). Involved in protein export. Acts as a chaperone by maintaining the newly synthesized protein in an open conformation. Functions as a peptidyl-prolyl cis-trans isomerase. This Streptomyces avermitilis (strain ATCC 31267 / DSM 46492 / JCM 5070 / NBRC 14893 / NCIMB 12804 / NRRL 8165 / MA-4680) protein is Trigger factor.